The primary structure comprises 118 residues: Large ribosomal subunit protein uL18 (118 aa).

It belongs to the universal ribosomal protein uL18 family. In terms of assembly, part of the 50S ribosomal subunit; part of the 5S rRNA/L5/L18/L25 subcomplex. Contacts the 5S and 23S rRNAs.

In terms of biological role, this is one of the proteins that bind and probably mediate the attachment of the 5S RNA into the large ribosomal subunit, where it forms part of the central protuberance. In Ligilactobacillus salivarius (strain UCC118) (Lactobacillus salivarius), this protein is Large ribosomal subunit protein uL18.